Here is a 654-residue protein sequence, read N- to C-terminus: Interferon-induced GTP-binding protein Mx1 (654 aa).

N-acetylmethionine is present on Met-1. Basic and acidic residues-rich tracts occupy residues Met-1–Asp-12 and Asp-23–Ser-32. Positions Met-1 to Lys-33 are disordered. The Dynamin-type G domain maps to Asp-62–Pro-335. A G1 motif region spans residues Gly-72–Ser-79. Gly-72–Ser-79 provides a ligand contact to GTP. The interval Val-97 to Arg-99 is G2 motif. A G3 motif region spans residues Asp-173–Gly-176. GTP-binding positions include Asp-173 to Ile-177 and Thr-242 to Asp-245. The G4 motif stretch occupies residues Thr-242–Asp-245. Residues Lys-274 to Gly-277 form a G5 motif region. Positions Leu-336–Glu-361 are bundle signaling element (BSE). Positions Glu-361–Cys-528 are middle domain. Residues Glu-362–Glu-624 form a stalk region. The disordered stretch occupies residues Glu-544–Glu-563. The segment at Lys-549–Lys-552 is critical for lipid-binding. In terms of domain architecture, GED spans Thr-566 to Gly-654.

The protein belongs to the TRAFAC class dynamin-like GTPase superfamily. Dynamin/Fzo/YdjA family. In terms of assembly, homooligomer. Oligomerizes into multimeric filamentous or ring-like structures by virtue of its stalk domain. Oligomerization is critical for GTPase activity, protein stability, and recognition of viral target structures. Interacts with TRPC1, TRPC3, TRPC4, TRPC5, TRPC6 and TRPC7. Interacts with HSPA5. Interacts with DDX39A and DDX39B. Interacts with TUBB/TUBB5. In terms of processing, ISGylated.

It localises to the cytoplasm. The protein resides in the endoplasmic reticulum membrane. It is found in the perinuclear region. Functionally, interferon-induced dynamin-like GTPase with antiviral activity. The polypeptide is Interferon-induced GTP-binding protein Mx1 (MX1) (Ovis aries (Sheep)).